We begin with the raw amino-acid sequence, 274 residues long: Large ribosomal subunit protein uL2cz/uL2cy (274 aa).

A disordered region spans residues 224–253 (NPIDHPHGGGEGRAPIGRKKPTTPWGYPAL).

Belongs to the universal ribosomal protein uL2 family. As to quaternary structure, part of the 50S ribosomal subunit.

It is found in the plastid. The protein is Large ribosomal subunit protein uL2cz/uL2cy (rpl2-A) of Epifagus virginiana (Beechdrops).